A 115-amino-acid chain; its full sequence is MALSPFLAAVIPLVLLLSRAPPSADTRTTGHLCGKDLVNALYIACGVRGFFYDPTKMKRDTGALAAFLPLAYAEDNESQDDESIGINEVLKSKRGIVEQCCHKRCSIYDLENYCN.

The first 26 residues, 1–26 (MALSPFLAAVIPLVLLLSRAPPSADT), serve as a signal peptide directing secretion. Disulfide bonds link Cys-33–Cys-101, Cys-45–Cys-114, and Cys-100–Cys-105. A propeptide spans 60–92 (DTGALAAFLPLAYAEDNESQDDESIGINEVLKS) (c peptide).

The protein belongs to the insulin family. Heterodimer of a B chain and an A chain linked by two disulfide bonds.

It is found in the secreted. Insulin decreases blood glucose concentration. It increases cell permeability to monosaccharides, amino acids and fatty acids. It accelerates glycolysis, the pentose phosphate cycle, and glycogen synthesis in liver. The chain is Insulin (ins) from Myxine glutinosa (Atlantic hagfish).